The following is a 464-amino-acid chain: Siroheme synthase (464 aa).

The tract at residues 1 to 203 (MDYLPLFHNL…GQETEAERLL (203 aa)) is precorrin-2 dehydrogenase /sirohydrochlorin ferrochelatase. NAD(+) is bound by residues 22 to 23 (EI) and 43 to 44 (PQ). Ser-128 is modified (phosphoserine). The uroporphyrinogen-III C-methyltransferase stretch occupies residues 216–464 (GEVYLVGAGP…AWFEGRQSAD (249 aa)). Pro-225 provides a ligand contact to S-adenosyl-L-methionine. Asp-248 (proton acceptor) is an active-site residue. Lys-270 (proton donor) is an active-site residue. S-adenosyl-L-methionine-binding positions include 301–303 (GGD), Ile-306, 331–332 (TA), Met-383, and Gly-412.

In the N-terminal section; belongs to the precorrin-2 dehydrogenase / sirohydrochlorin ferrochelatase family. It in the C-terminal section; belongs to the precorrin methyltransferase family.

It carries out the reaction uroporphyrinogen III + 2 S-adenosyl-L-methionine = precorrin-2 + 2 S-adenosyl-L-homocysteine + H(+). The catalysed reaction is precorrin-2 + NAD(+) = sirohydrochlorin + NADH + 2 H(+). It catalyses the reaction siroheme + 2 H(+) = sirohydrochlorin + Fe(2+). It participates in cofactor biosynthesis; adenosylcobalamin biosynthesis; precorrin-2 from uroporphyrinogen III: step 1/1. Its pathway is cofactor biosynthesis; adenosylcobalamin biosynthesis; sirohydrochlorin from precorrin-2: step 1/1. It functions in the pathway porphyrin-containing compound metabolism; siroheme biosynthesis; precorrin-2 from uroporphyrinogen III: step 1/1. The protein operates within porphyrin-containing compound metabolism; siroheme biosynthesis; siroheme from sirohydrochlorin: step 1/1. It participates in porphyrin-containing compound metabolism; siroheme biosynthesis; sirohydrochlorin from precorrin-2: step 1/1. In terms of biological role, multifunctional enzyme that catalyzes the SAM-dependent methylations of uroporphyrinogen III at position C-2 and C-7 to form precorrin-2 via precorrin-1. Then it catalyzes the NAD-dependent ring dehydrogenation of precorrin-2 to yield sirohydrochlorin. Finally, it catalyzes the ferrochelation of sirohydrochlorin to yield siroheme. The protein is Siroheme synthase of Azotobacter vinelandii (strain DJ / ATCC BAA-1303).